We begin with the raw amino-acid sequence, 310 residues long: uncharacterized protein (310 aa).

It belongs to the YiaX1 family.

This is an uncharacterized protein from Salmonella typhimurium (strain LT2 / SGSC1412 / ATCC 700720).